A 49-amino-acid polypeptide reads, in one-letter code: Large ribosomal subunit protein bL33 (49 aa).

It belongs to the bacterial ribosomal protein bL33 family.

The protein is Large ribosomal subunit protein bL33 of Alkaliphilus oremlandii (strain OhILAs) (Clostridium oremlandii (strain OhILAs)).